The chain runs to 652 residues: Probable endo-1,3(4)-beta-glucanase AFUB_029980 (652 aa).

The N-terminal stretch at 1–21 (MAPSSLLLSVGSLITSSLVSA) is a signal peptide. Residues 36 to 289 (ESWQGESFIN…WAGNVFAEST (254 aa)) form the GH16 domain. The N-linked (GlcNAc...) asparagine glycan is linked to Asn64. Glu145 functions as the Nucleophile in the catalytic mechanism. Catalysis depends on Glu150, which acts as the Proton donor. 2 N-linked (GlcNAc...) asparagine glycosylation sites follow: Asn200 and Asn208. A disordered region spans residues 379-423 (NTVATSAADHATPSSAETTTVPAATGAPSVSATEGGDSELESTST). Positions 390–410 (TPSSAETTTVPAATGAPSVSA) are enriched in polar residues. N-linked (GlcNAc...) asparagine glycosylation is present at Asn453. The disordered stretch occupies residues 509–551 (SEIPTAPPEPVSQAVSTGSFDDSDTAQGDSEEQGSIASASVAP). Residues 529–540 (DDSDTAQGDSEE) are compositionally biased toward acidic residues. Asn630 carries the GPI-anchor amidated asparagine lipid modification. Positions 631–652 (GANRMSVGLSGLIGVMFIAALA) are cleaved as a propeptide — removed in mature form.

This sequence belongs to the glycosyl hydrolase 16 family.

It is found in the cell membrane. The enzyme catalyses Endohydrolysis of (1-&gt;3)- or (1-&gt;4)-linkages in beta-D-glucans when the glucose residue whose reducing group is involved in the linkage to be hydrolyzed is itself substituted at C-3.. Mixed-linked glucanase involved in the degradation of complex natural cellulosic substrates. This is Probable endo-1,3(4)-beta-glucanase AFUB_029980 from Aspergillus fumigatus (strain CBS 144.89 / FGSC A1163 / CEA10) (Neosartorya fumigata).